Consider the following 197-residue polypeptide: Probable GTP-binding protein EngB (197 aa).

In terms of domain architecture, EngB-type G spans 25 to 197; it reads SAPEIAFAGR…VRDEFFKFTR (173 aa). Residues 33–40, 60–64, 79–82, 146–149, and 177–179 each bind GTP; these read GRSNVGKS, GCTRQ, DLPG, TKID, and MSI. Mg(2+)-binding residues include S40 and T62.

Belongs to the TRAFAC class TrmE-Era-EngA-EngB-Septin-like GTPase superfamily. EngB GTPase family. Mg(2+) serves as cofactor.

Its function is as follows. Necessary for normal cell division and for the maintenance of normal septation. The protein is Probable GTP-binding protein EngB of Wolbachia pipientis wMel.